We begin with the raw amino-acid sequence, 220 residues long: Putative amino-acid transporter YisU (220 aa).

A run of 6 helical transmembrane segments spans residues 15–35, 67–87, 89–109, 128–148, 161–181, and 195–215; these read FFSM…ILPL, TLLI…LPVF, TVMM…TWNI, AFAA…IGVI, WLFM…LAIA, and MLIV…YFGV.

Belongs to the LysE/ArgO transporter (TC 2.A.75) family.

It localises to the cell membrane. In Bacillus subtilis (strain 168), this protein is Putative amino-acid transporter YisU (yisU).